The sequence spans 957 residues: UvrABC system protein A (957 aa).

ATP is bound at residue Gly-33 to Ser-40. The segment at Cys-252 to Cys-279 adopts a C4-type zinc-finger fold. ABC transporter domains are found at residues Trp-309–Leu-587 and Pro-607–Arg-935. Gly-639 to Ser-646 provides a ligand contact to ATP. The C4-type zinc finger occupies Cys-738–Cys-764.

The protein belongs to the ABC transporter superfamily. UvrA family. In terms of assembly, forms a heterotetramer with UvrB during the search for lesions.

It localises to the cytoplasm. Its function is as follows. The UvrABC repair system catalyzes the recognition and processing of DNA lesions. UvrA is an ATPase and a DNA-binding protein. A damage recognition complex composed of 2 UvrA and 2 UvrB subunits scans DNA for abnormalities. When the presence of a lesion has been verified by UvrB, the UvrA molecules dissociate. This chain is UvrABC system protein A, found in Halalkalibacterium halodurans (strain ATCC BAA-125 / DSM 18197 / FERM 7344 / JCM 9153 / C-125) (Bacillus halodurans).